The following is a 421-amino-acid chain: Medium-chain specific acyl-CoA dehydrogenase, mitochondrial (421 aa).

The N-terminal 25 residues, 1–25 (MAAAFGRCCRVLRSISRFHWRSQHT), are a transit peptide targeting the mitochondrion. An N6-acetyllysine; alternate modification is found at Lys-69. Lys-69 carries the N6-succinyllysine; alternate modification. Residue 158-167 (YCVTEPGAGS) coordinates FAD. Octanoyl-CoA is bound at residue Ser-167. The residue at position 179 (Lys-179) is an N6-succinyllysine. Residue 191–193 (WIT) participates in FAD binding. An N6-acetyllysine; alternate mark is found at Lys-212, Lys-217, Lys-259, and Lys-271. An N6-succinyllysine; alternate mark is found at Lys-212, Lys-217, Lys-259, and Lys-271. Asp-278 serves as a coordination point for octanoyl-CoA. An N6-acetyllysine modification is found at Lys-279. Arg-281 provides a ligand contact to octanoyl-CoA. Position 301 is an N6-acetyllysine (Lys-301). Residues 306–308 (RKT) and 316–317 (HQ) each bind FAD. 2 residues coordinate octanoyl-CoA: Arg-349 and Thr-351. Residue Thr-351 is modified to Phosphothreonine. 374-378 (QIFGG) provides a ligand contact to FAD. Glu-401 lines the octanoyl-CoA pocket. Catalysis depends on Glu-401, which acts as the Proton acceptor. 402–405 (GTSQ) is a binding site for FAD.

Belongs to the acyl-CoA dehydrogenase family. In terms of assembly, homotetramer. Interacts with the heterodimeric electron transfer flavoprotein ETF. The cofactor is FAD. In terms of processing, acetylated. Could occur at proximity of the cofactor-binding sites and reduce the catalytic activity. Could be deacetylated by SIRT3.

Its subcellular location is the mitochondrion matrix. The catalysed reaction is a medium-chain 2,3-saturated fatty acyl-CoA + oxidized [electron-transfer flavoprotein] + H(+) = a medium-chain (2E)-enoyl-CoA + reduced [electron-transfer flavoprotein]. It catalyses the reaction pentanoyl-CoA + oxidized [electron-transfer flavoprotein] + H(+) = (2E)-pentenoyl-CoA + reduced [electron-transfer flavoprotein]. It carries out the reaction hexanoyl-CoA + oxidized [electron-transfer flavoprotein] + H(+) = (2E)-hexenoyl-CoA + reduced [electron-transfer flavoprotein]. The enzyme catalyses octanoyl-CoA + oxidized [electron-transfer flavoprotein] + H(+) = (2E)-octenoyl-CoA + reduced [electron-transfer flavoprotein]. The catalysed reaction is decanoyl-CoA + oxidized [electron-transfer flavoprotein] + H(+) = (2E)-decenoyl-CoA + reduced [electron-transfer flavoprotein]. It catalyses the reaction dodecanoyl-CoA + oxidized [electron-transfer flavoprotein] + H(+) = (2E)-dodecenoyl-CoA + reduced [electron-transfer flavoprotein]. It carries out the reaction tetradecanoyl-CoA + oxidized [electron-transfer flavoprotein] + H(+) = (2E)-tetradecenoyl-CoA + reduced [electron-transfer flavoprotein]. The enzyme catalyses oxidized [electron-transfer flavoprotein] + hexadecanoyl-CoA + H(+) = (2E)-hexadecenoyl-CoA + reduced [electron-transfer flavoprotein]. The protein operates within lipid metabolism; mitochondrial fatty acid beta-oxidation. Its function is as follows. Medium-chain specific acyl-CoA dehydrogenase is one of the acyl-CoA dehydrogenases that catalyze the first step of mitochondrial fatty acid beta-oxidation, an aerobic process breaking down fatty acids into acetyl-CoA and allowing the production of energy from fats. The first step of fatty acid beta-oxidation consists in the removal of one hydrogen from C-2 and C-3 of the straight-chain fatty acyl-CoA thioester, resulting in the formation of trans-2-enoyl-CoA. Electron transfer flavoprotein (ETF) is the electron acceptor that transfers electrons to the main mitochondrial respiratory chain via ETF-ubiquinone oxidoreductase (ETF dehydrogenase). Among the different mitochondrial acyl-CoA dehydrogenases, medium-chain specific acyl-CoA dehydrogenase acts specifically on acyl-CoAs with saturated 6 to 12 carbons long primary chains. The protein is Medium-chain specific acyl-CoA dehydrogenase, mitochondrial of Macaca fascicularis (Crab-eating macaque).